A 285-amino-acid chain; its full sequence is Casein kinase II subunit beta-2 (285 aa).

A disordered region spans residues 226-285 (FKDAEDEAELDDDDEEEEEEEEEEEELAAMDEAEGAQQQHAAAAAGTATGGVAAGGEGVH). Acidic residues predominate over residues 229–259 (AEDEAELDDDDEEEEEEEEEEEELAAMDEAE). The segment covering 260–272 (GAQQQHAAAAAGT) has biased composition (low complexity). The segment covering 273–285 (ATGGVAAGGEGVH) has biased composition (gly residues).

It belongs to the casein kinase 2 subunit beta family. In terms of assembly, tetramer composed of two alpha chains, one beta chain and one beta' chain. Phosphorylated by alpha subunit.

Its function is as follows. Regulatory subunit of casein kinase II/CK2. As part of the kinase complex regulates the basal catalytic activity of the alpha subunit a constitutively active serine/threonine-protein kinase that phosphorylates a large number of substrates containing acidic residues C-terminal to the phosphorylated serine or threonine. This is Casein kinase II subunit beta-2 (ckb-2) from Neurospora crassa (strain ATCC 24698 / 74-OR23-1A / CBS 708.71 / DSM 1257 / FGSC 987).